Reading from the N-terminus, the 547-residue chain is GID complex substrate-recognition subunit 10 (547 aa).

Composition is skewed to polar residues over residues 1 to 11 and 28 to 41; these read MPRSLDNFQNE and GFPN…SNSQ. Disordered regions lie at residues 1–42, 60–115, 169–217, and 285–313; these read MPRS…NSQR, EQDS…SNAT, RNSS…NPQS, and PAVL…QTPN. Over residues 99 to 108 the composition is skewed to basic residues; the sequence is SASRQRRRSG. The segment covering 169–185 has biased composition (polar residues); sequence RNSSTFGSNPNSVFSAQ. Composition is skewed to low complexity over residues 186–199, 207–217, and 298–307; these read PTEP…SSFP, SRSISISNPQS, and SSSSASSYGS.

The protein belongs to the GID4/VID24 family. As to quaternary structure, substrate-recognition component of the GID/CTLH complex. In the absence of stress, the complex exists as an inactive anticipatory complex (GID(Ant)), composed of Gid1, the E3 ubiquitin-ligase Gid2, Gid5, Gid8, and the RING-like subunit Gid9, awaiting a substrate receptor to form the active E3 ligase complex. When cells are shifted to glucose-containing medium, the substrate receptor Gid4 is induced and becomes part of the complex, named GID(SR4). Additionally, Gid7 transforms the GID(SR4) E3 ligase core into a higher-order supramolecular assembly (Chelator-GID(SR4)). Under osmotic or heat stress, the substrate receptor Gid10 is induced and becomes part of the complex, named GID(SR10). Interacts with proteins that have an N-terminal Pro/N-degron.

It localises to the nucleus. Substrate-recognition component of the GID E3 ligase complex recruiting N termini and catalyzing ubiquitination of proteins targeted for degradation. GID E3 is regulated through assembly with interchangeable N-degron-binding substrate receptors induced by distinct environmental perturbations. Required for the adaptation to osmotic or heat stress. Specific for substrates with an N-terminal Pro (Pro/N-degron). The sequence is that of GID complex substrate-recognition subunit 10 (gid10) from Schizosaccharomyces pombe (strain 972 / ATCC 24843) (Fission yeast).